The chain runs to 273 residues: Putative tyrosine-protein phosphatase H16_A0669 (273 aa).

An N-terminal signal peptide occupies residues 1–15 (MIKWLQRAGCLSAHA). Cys169 functions as the Phosphocysteine intermediate in the catalytic mechanism.

Belongs to the protein-tyrosine phosphatase family.

The catalysed reaction is O-phospho-L-tyrosyl-[protein] + H2O = L-tyrosyl-[protein] + phosphate. This Cupriavidus necator (strain ATCC 17699 / DSM 428 / KCTC 22496 / NCIMB 10442 / H16 / Stanier 337) (Ralstonia eutropha) protein is Putative tyrosine-protein phosphatase H16_A0669.